The primary structure comprises 551 residues: Inosine-5'-monophosphate dehydrogenase (551 aa).

CBS domains follow at residues 102-163 (FILD…PLSE) and 165-221 (MTSD…PLAS). Residues 258–260 (DSS) and 308–310 (GMG) contribute to the NAD(+) site. K(+) contacts are provided by Gly310 and Gly312. Residue Ser313 participates in IMP binding. Residue Cys315 participates in K(+) binding. Catalysis depends on Cys315, which acts as the Thioimidate intermediate. Residues 349–351 (DGG), 372–373 (GS), and 396–400 (YRGMG) each bind IMP. Residues 407 to 462 (AGTRRTASPPARGLRSPEASPSTAASSGGASRASALSEASPSAKSEASRTSTSTGS) form a disordered region. A compositionally biased stretch (low complexity) spans 422-462 (SPEASPSTAASSGGASRASALSEASPSAKSEASRTSTSTGS). Catalysis depends on Arg465, which acts as the Proton acceptor. Residue Gln477 coordinates IMP. Residues Glu536 and Gly537 each coordinate K(+).

Belongs to the IMPDH/GMPR family. As to quaternary structure, homotetramer. The cofactor is K(+).

It is found in the cytoplasm. The catalysed reaction is IMP + NAD(+) + H2O = XMP + NADH + H(+). The protein operates within purine metabolism; XMP biosynthesis via de novo pathway; XMP from IMP: step 1/1. Mycophenolic acid (MPA) is a non-competitive inhibitor that prevents formation of the closed enzyme conformation by binding to the same site as the amobile flap. In contrast, mizoribine monophosphate (MZP) is a competitive inhibitor that induces the closed conformation. MPA is a potent inhibitor of mammalian IMPDHs but a poor inhibitor of the bacterial enzymes. MZP is a more potent inhibitor of bacterial IMPDH. Potently inhibited by MPA and adenine dinucleotide analogs such as thiazole-4-carboxamide adenine dinucleotide (TAD). In terms of biological role, catalyzes the conversion of inosine 5'-phosphate (IMP) to xanthosine 5'-phosphate (XMP), the first committed and rate-limiting step in the de novo synthesis of guanine nucleotides, and therefore plays an important role in the regulation of cell growth. This chain is Inosine-5'-monophosphate dehydrogenase, found in Toxoplasma gondii.